Reading from the N-terminus, the 150-residue chain is FAD synthase (150 aa).

Residues 10-11, 15-18, aspartate 97, and tyrosine 124 contribute to the ATP site; these read VF and HPGH.

Belongs to the archaeal FAD synthase family. In terms of assembly, homodimer. A divalent metal cation is required as a cofactor.

It carries out the reaction FMN + ATP + H(+) = FAD + diphosphate. The protein operates within cofactor biosynthesis; FAD biosynthesis; FAD from FMN: step 1/1. Its function is as follows. Catalyzes the transfer of the AMP portion of ATP to flavin mononucleotide (FMN) to produce flavin adenine dinucleotide (FAD) coenzyme. The chain is FAD synthase from Methanopyrus kandleri (strain AV19 / DSM 6324 / JCM 9639 / NBRC 100938).